The sequence spans 311 residues: 4-diphosphocytidyl-2-C-methyl-D-erythritol kinase (311 aa).

K16 is a catalytic residue. An ATP-binding site is contributed by P100 to S110. The active site involves D142.

It belongs to the GHMP kinase family. IspE subfamily.

The enzyme catalyses 4-CDP-2-C-methyl-D-erythritol + ATP = 4-CDP-2-C-methyl-D-erythritol 2-phosphate + ADP + H(+). Its pathway is isoprenoid biosynthesis; isopentenyl diphosphate biosynthesis via DXP pathway; isopentenyl diphosphate from 1-deoxy-D-xylulose 5-phosphate: step 3/6. Catalyzes the phosphorylation of the position 2 hydroxy group of 4-diphosphocytidyl-2C-methyl-D-erythritol. The polypeptide is 4-diphosphocytidyl-2-C-methyl-D-erythritol kinase (Prochlorococcus marinus (strain MIT 9312)).